The chain runs to 478 residues: tRNA modification GTPase MnmE (478 aa).

Residues arginine 25, glutamate 82, and lysine 135 each contribute to the (6S)-5-formyl-5,6,7,8-tetrahydrofolate site. The 170-residue stretch at 231 to 400 (GIKVVIAGQP…LREQLLRVVG (170 aa)) folds into the TrmE-type G domain. A K(+)-binding site is contributed by asparagine 241. Residues 241 to 246 (NVGKSS), 260 to 266 (TPVAGTT), and 285 to 288 (DTAG) each bind GTP. Serine 245 serves as a coordination point for Mg(2+). Residues threonine 260, valine 262, and threonine 265 each contribute to the K(+) site. Threonine 266 serves as a coordination point for Mg(2+). Lysine 478 lines the (6S)-5-formyl-5,6,7,8-tetrahydrofolate pocket.

Belongs to the TRAFAC class TrmE-Era-EngA-EngB-Septin-like GTPase superfamily. TrmE GTPase family. Homodimer. Heterotetramer of two MnmE and two MnmG subunits. K(+) is required as a cofactor.

The protein resides in the cytoplasm. Exhibits a very high intrinsic GTPase hydrolysis rate. Involved in the addition of a carboxymethylaminomethyl (cmnm) group at the wobble position (U34) of certain tRNAs, forming tRNA-cmnm(5)s(2)U34. This is tRNA modification GTPase MnmE from Polaromonas naphthalenivorans (strain CJ2).